The following is a 296-amino-acid chain: Fructose-bisphosphate aldolase class 1 (296 aa).

Glutamate 175 functions as the Proton acceptor in the catalytic mechanism. The Schiff-base intermediate with dihydroxyacetone-P role is filled by lysine 212.

Belongs to the class I fructose-bisphosphate aldolase family.

It catalyses the reaction beta-D-fructose 1,6-bisphosphate = D-glyceraldehyde 3-phosphate + dihydroxyacetone phosphate. It functions in the pathway carbohydrate degradation; glycolysis; D-glyceraldehyde 3-phosphate and glycerone phosphate from D-glucose: step 4/4. This is Fructose-bisphosphate aldolase class 1 from Staphylococcus aureus (strain MSSA476).